Here is a 949-residue protein sequence, read N- to C-terminus: Coiled-coil domain-containing protein 80 (949 aa).

Residues 1–27 form the signal peptide; sequence MTWKMGPHFTMLLAMWLVCGSASQSSA. Disordered stretches follow at residues 24-79, 289-360, and 408-609; these read QSSA…RRKS, HVVQ…ATRA, and GPSV…SPRK. Residues 295 to 305 show a composition bias toward gly residues; that stretch reads NNGGGGGGSTG. Positions 308–328 are enriched in basic and acidic residues; sequence SDKRKEDPRRTQIHPTREPPR. Positions 345–360 are enriched in low complexity; that stretch reads RATTLPPAPVTTATRA. Residues 419–429 are compositionally biased toward basic and acidic residues; that stretch reads PRKEQQREKPQ. Positions 436–453 are enriched in polar residues; that stretch reads KATNYGSFTATPPTTLWE. Positions 463–477 are enriched in basic and acidic residues; that stretch reads RFRDNRTDKREHGHQ. Asparagine 467 is a glycosylation site (N-linked (GlcNAc...) asparagine). Residues 487–498 show a composition bias toward basic residues; the sequence is KPIKGKLPKKKE. Basic and acidic residues-rich tracts occupy residues 499–511, 534–548, and 556–581; these read KILSNEYEAKYDL, KESKKHEKPEKPEKE, and AKPDKLLRSEKQMKKAEKKSKQEKEK. Glycyl lysine isopeptide (Lys-Gly) (interchain with G-Cter in SUMO2) cross-links involve residues lysine 544 and lysine 547. Residues 559 to 587 adopt a coiled-coil conformation; sequence DKLLRSEKQMKKAEKKSKQEKEKTKKKKA.

Belongs to the CCDC80 family. As to quaternary structure, binds to various extracellular matrix proteins. In terms of processing, phosphorylated. As to expression, isoform 2 is expressed in uterus, liver, lung, spleen, kidney, heart, bladder, skeletal muscle and brain (at protein level). Isoform 2 is expressed very low in mammary gland and intestine (at protein level). Isoform 2 is expressed in lactating mammary glands and mammary tumors (at protein level). Ubiquitous (isoform 1). Isoform 2 is expressed in ovary, uterus, mammary glands, liver, lung, spleen, kidney, heart, bladder, intestine, skeletal muscle and brain.

The protein localises to the secreted. It localises to the extracellular space. The protein resides in the extracellular matrix. In terms of biological role, promotes cell adhesion and matrix assembly. The sequence is that of Coiled-coil domain-containing protein 80 (Ccdc80) from Rattus norvegicus (Rat).